The primary structure comprises 120 residues: Holo-[acyl-carrier-protein] synthase (120 aa).

Residues aspartate 8 and glutamate 60 each contribute to the Mg(2+) site.

Belongs to the P-Pant transferase superfamily. AcpS family. Mg(2+) is required as a cofactor.

It localises to the cytoplasm. The catalysed reaction is apo-[ACP] + CoA = holo-[ACP] + adenosine 3',5'-bisphosphate + H(+). Transfers the 4'-phosphopantetheine moiety from coenzyme A to a Ser of acyl-carrier-protein. This chain is Holo-[acyl-carrier-protein] synthase, found in Anaplasma marginale (strain Florida).